Here is a 362-residue protein sequence, read N- to C-terminus: Phosphoserine aminotransferase (362 aa).

Arg-43 contributes to the L-glutamate binding site. Residues 77-78, Trp-103, Thr-153, Asp-173, and Gln-196 contribute to the pyridoxal 5'-phosphate site; that span reads AR. Lys-197 is subject to N6-(pyridoxal phosphate)lysine.

Belongs to the class-V pyridoxal-phosphate-dependent aminotransferase family. SerC subfamily. As to quaternary structure, homodimer. Pyridoxal 5'-phosphate serves as cofactor.

Its subcellular location is the cytoplasm. It catalyses the reaction O-phospho-L-serine + 2-oxoglutarate = 3-phosphooxypyruvate + L-glutamate. It carries out the reaction 4-(phosphooxy)-L-threonine + 2-oxoglutarate = (R)-3-hydroxy-2-oxo-4-phosphooxybutanoate + L-glutamate. Its pathway is amino-acid biosynthesis; L-serine biosynthesis; L-serine from 3-phospho-D-glycerate: step 2/3. It participates in cofactor biosynthesis; pyridoxine 5'-phosphate biosynthesis; pyridoxine 5'-phosphate from D-erythrose 4-phosphate: step 3/5. In terms of biological role, catalyzes the reversible conversion of 3-phosphohydroxypyruvate to phosphoserine and of 3-hydroxy-2-oxo-4-phosphonooxybutanoate to phosphohydroxythreonine. This chain is Phosphoserine aminotransferase, found in Legionella pneumophila subsp. pneumophila (strain Philadelphia 1 / ATCC 33152 / DSM 7513).